A 303-amino-acid polypeptide reads, in one-letter code: Pantothenate synthetase (303 aa).

30 to 37 (MGYLHAGH) contacts ATP. His-37 serves as the catalytic Proton donor. Gln-61 is a (R)-pantoate binding site. Gln-61 contacts beta-alanine. Residue 147 to 150 (GAKD) participates in ATP binding. Gln-153 is a (R)-pantoate binding site. ATP is bound by residues Val-176 and 184–187 (LSSR).

The protein belongs to the pantothenate synthetase family. In terms of assembly, homodimer.

It localises to the cytoplasm. The enzyme catalyses (R)-pantoate + beta-alanine + ATP = (R)-pantothenate + AMP + diphosphate + H(+). It participates in cofactor biosynthesis; (R)-pantothenate biosynthesis; (R)-pantothenate from (R)-pantoate and beta-alanine: step 1/1. Its function is as follows. Catalyzes the condensation of pantoate with beta-alanine in an ATP-dependent reaction via a pantoyl-adenylate intermediate. In Rhizobium johnstonii (strain DSM 114642 / LMG 32736 / 3841) (Rhizobium leguminosarum bv. viciae), this protein is Pantothenate synthetase.